Here is a 395-residue protein sequence, read N- to C-terminus: Zinc-regulated GTPase metalloprotein activator 1A (395 aa).

Residues 1 to 22 (MLPAVGSADEEEDPAEEDCPEL) are disordered. Over residues 8–20 (ADEEEDPAEEDCP) the composition is skewed to acidic residues. The short motif at 17 to 24 (EDCPELVP) is the psi-PxLVp motif element. Position 49–56 (49–56 (GYLGAGKT)) interacts with GTP. The Zn(2+) site is built by C107, C109, and C110. The CXCC motif signature appears at 107–110 (CLCC). Residues 110–114 (CSVKD) and 203–206 (NKTD) contribute to the GTP site. The CobW C-terminal domain maps to 274–377 (IVTITFEVPG…ILKQLFIATV (104 aa)).

Belongs to the SIMIBI class G3E GTPase family. ZNG1 subfamily. In terms of tissue distribution, ubiquitously expressed. Up-regulated in cultured astrocytes treated with dopamine.

It localises to the nucleus. It carries out the reaction GTP + H2O = GDP + phosphate + H(+). Its function is as follows. Zinc chaperone that directly transfers zinc cofactor to target metalloproteins, thereby activating them. Catalyzes zinc insertion into the active site of methionine aminopeptidase METAP1, which function to cleave the initiator methionine from polypeptides during or after protein translation. Mechanistically, the N-terminal psi-PxLVp motif binds to the C6H2-type zinc finger of inactive form of METAP1. After formation of the docked complex, zinc is transferred from the CXCC motif in the GTPase domain of ZNG1A to the zinc binding site in the peptidase domain of METAP1 in a process requiring GTP hydrolysis. GTP/GDP exchange is required for release of active METAP1. This is Zinc-regulated GTPase metalloprotein activator 1A from Homo sapiens (Human).